The primary structure comprises 366 residues: MPGKELPDRCMNCHEAEPAFLLRERHVCQECYIRFLNFKPFRRMERYRLRRNMPQTGPCKLLLPLSYGVSSTVLLHMLHRQLEALRSKKHGPAGFEILVLVVEPSTISPVPPHEEGFALAQQTFPLCSFTRLPFHSIFELDPDVHQIMSQYAGEHFTDDTSLSDEERLNRFRRSITTATSKSDVDQILLNKLVVAFAKKMECRGIVWGDSDSKLAAKTLANVAKGRGSAVTWQVCDGMSPFGLEFNFPLRDVFTAEIRTYATLFPELAGIIVHDEPPSENTLTKNLSIDELMIRYVSTQGEKYPGVMLNVTRTASKLQSSGTSIGGLQCNFCGAFMTTNENITGEQGNEQLQFCYACARSQPELSC.

Belongs to the CTU2/NCS2 family.

The protein resides in the cytoplasm. It participates in tRNA modification; 5-methoxycarbonylmethyl-2-thiouridine-tRNA biosynthesis. In terms of biological role, plays a central role in 2-thiolation of mcm(5)S(2)U at tRNA wobble positions of tRNA(Lys), tRNA(Glu) and tRNA(Gln). May act by forming a heterodimer with ncs6 that ligates sulfur from thiocarboxylated urm1 onto the uridine of tRNAs at wobble position. Prior mcm(5) tRNA modification by the elongator complex is required for 2-thiolation. May also be involved in protein urmylation. The sequence is that of Cytoplasmic tRNA 2-thiolation protein 2 (ncs2) from Aspergillus niger (strain ATCC MYA-4892 / CBS 513.88 / FGSC A1513).